The following is a 284-amino-acid chain: Bifunctional protein FolD (284 aa).

NADP(+) contacts are provided by residues 166–168 and Ile232; that span reads GAS.

This sequence belongs to the tetrahydrofolate dehydrogenase/cyclohydrolase family. As to quaternary structure, homodimer.

The catalysed reaction is (6R)-5,10-methylene-5,6,7,8-tetrahydrofolate + NADP(+) = (6R)-5,10-methenyltetrahydrofolate + NADPH. The enzyme catalyses (6R)-5,10-methenyltetrahydrofolate + H2O = (6R)-10-formyltetrahydrofolate + H(+). Its pathway is one-carbon metabolism; tetrahydrofolate interconversion. In terms of biological role, catalyzes the oxidation of 5,10-methylenetetrahydrofolate to 5,10-methenyltetrahydrofolate and then the hydrolysis of 5,10-methenyltetrahydrofolate to 10-formyltetrahydrofolate. This is Bifunctional protein FolD from Shewanella oneidensis (strain ATCC 700550 / JCM 31522 / CIP 106686 / LMG 19005 / NCIMB 14063 / MR-1).